The chain runs to 370 residues: A-type ATP synthase subunit C (370 aa).

The protein belongs to the V-ATPase V0D/AC39 subunit family. In terms of assembly, has multiple subunits with at least A(3), B(3), C, D, E, F, H, I and proteolipid K(x).

The protein resides in the cell membrane. Functionally, component of the A-type ATP synthase that produces ATP from ADP in the presence of a proton gradient across the membrane. The sequence is that of A-type ATP synthase subunit C from Pyrococcus abyssi (strain GE5 / Orsay).